The sequence spans 464 residues: Galactose-proton symporter (464 aa).

The Cytoplasmic segment spans residues 1 to 15 (MPDAKKQGRSNKAMT). A helical membrane pass occupies residues 16 to 36 (FFVCFLAALAGLLFGLDIGVI). The Periplasmic segment spans residues 37 to 56 (AGALPFIADEFQITSHTQEW). A helical transmembrane segment spans residues 57–77 (VVSSMMFGAAVGAVGSGWLSF). The Cytoplasmic portion of the chain corresponds to 78–84 (KLGRKKS). The helical transmembrane segment at 85-105 (LMIGAILFVAGSLFSAAAPNV) threads the bilayer. The Periplasmic portion of the chain corresponds to 106 to 112 (EVLILSR). The chain crosses the membrane as a helical span at residues 113-133 (VLLGLAVGVASYTAPLYLSEI). At 134–139 (APEKIR) the chain is on the cytoplasmic side. The helical transmembrane segment at 140–160 (GSMISMYQLMITIGILGAYLS) threads the bilayer. Over 161-171 (DTAFSYTGAWR) the chain is Periplasmic. Residues 172-192 (WMLGVIIIPAILLLIGVFFLP) traverse the membrane as a helical segment. Topologically, residues 193 to 250 (DSPRWFAAKRRFVDAERVLLRLRDTSAEAKRELDEIRESLQVKQSGWALFKENSNFRR) are cytoplasmic. A helical transmembrane segment spans residues 251 to 271 (AVFLGVLLQVMQQFTGMNVIM). Over 272-290 (YYAPKIFELAGYTNTTEQM) the chain is Periplasmic. A helical membrane pass occupies residues 291–311 (WGTVIVGLTNVLATFIAIGLV). The Cytoplasmic segment spans residues 312-321 (DRWGRKPTLT). Residues 322 to 342 (LGFLVMAAGMGVLGTMMHIGI) traverse the membrane as a helical segment. Residues 343-351 (HSPSAQYFA) lie on the Periplasmic side of the membrane. A helical membrane pass occupies residues 352-372 (IAMLLMFIVGFAMSAGPLIWV). At 373–394 (LCSEIQPLKGRDFGITCSTATN) the chain is on the cytoplasmic side. A helical membrane pass occupies residues 395–415 (WIANMIVGATFLTMLNTLGNA). A topological domain (periplasmic) is located at residue asparagine 416. The chain crosses the membrane as a helical span at residues 417-437 (TFWVYAALNVLFILLTLWLVP). At 438-464 (ETKHVSLEHIERNLMKGRKLREIGAHD) the chain is on the cytoplasmic side.

The protein belongs to the major facilitator superfamily. Sugar transporter (TC 2.A.1.1) family.

It is found in the cell inner membrane. Its function is as follows. Uptake of galactose across the boundary membrane with the concomitant transport of protons into the cell (symport system). The protein is Galactose-proton symporter (galP) of Escherichia coli O6:H1 (strain CFT073 / ATCC 700928 / UPEC).